A 345-amino-acid polypeptide reads, in one-letter code: Prenyltransferase ltmC (345 aa).

His-112 contacts substrate. Mg(2+)-binding residues include Asp-119 and Asp-123. A substrate-binding site is contributed by Arg-128. Asn-130 is a glycosylation site (N-linked (GlcNAc...) asparagine). Substrate is bound by residues Lys-212, Thr-213, Gln-243, Asn-250, and Lys-260.

It belongs to the FPP/GGPP synthase family. Mg(2+) serves as cofactor.

Its pathway is secondary metabolite biosynthesis. In terms of biological role, prenyltransferase; part of the gene cluster that mediates the biosynthesis of lolitrems, indole-diterpene mycotoxins that are potent tremorgens in mammals, and are synthesized by clavicipitaceous fungal endophytes in association with their grass hosts. The geranylgeranyl diphosphate (GGPP) synthase ltmG is proposed to catalyze the first step in lolitrem biosynthesis. LtmG catalyzes a series of iterative condensations of isopentenyl diphosphate (IPP) with dimethylallyl diphosphate (DMAPP), geranyl diphosphate (GPP), and farnesyl diphosphate (FPP), to form GGPP. GGPP then condenses with indole-3-glycerol phosphate to form 3-geranylgeranylindole, an acyclic intermediate, to be incorporated into paxilline. Either ltmG or ltmC could be responsible for this step, as both are putative prenyl transferases. The FAD-dependent monooxygenase ltmM then catalyzes the epoxidation of the two terminal alkenes of the geranylgeranyl moiety, which is subsequently cyclized by ltmB, to paspaline. The cytochrome P450 monooxygenases ltmQ and ltmP can sequentially oxidize paspaline to terpendole E and terpendole F. Alternatively, ltmP converts paspaline to an intermediate which is oxidized by ltmQ to terpendole F. LtmF, ltmK, ltmE and ltmJ appear to be unique to the epichloe endophytes. The prenyltransferase ltmF is involved in the 27-hydroxyl-O-prenylation. The cytochrome P450 monooxygenase ltmK is required for the oxidative acetal ring formation. The multi-functional prenyltransferase ltmE is required for C20- and C21-prenylations of the indole ring of paspalanes and acts together with the cytochrome P450 monooxygenase ltmJ to yield lolitremanes by multiple oxidations and ring closures. The stereoisomer pairs of lolitriol and lolitrem N or lolitrem B and lolitrem F may be attributed to variations in the way in which ring closure can occur under the action of ltmJ. While the major product of this pathway is lolitrem B, the prenyl transferases and cytochrome P450 monooxygenases identified in this pathway have a remarkable versatility in their regio- and stereo-specificities to generate a diverse range of metabolites that are products of a metabolic grid rather than a linear pathway. This chain is Prenyltransferase ltmC, found in Epichloe festucae var. lolii (Neotyphodium lolii).